A 116-amino-acid polypeptide reads, in one-letter code: U16-barytoxin-Tl1f (116 aa).

The signal sequence occupies residues 1–20 (MKTIIVFLSLLVLATKFGDA). Residues 21-74 (NEGVNQEQMKEVIQNEFREDFLNEMAPMSLLQQLEAIESTLLEKEADRNSRQKR) constitute a propeptide that is removed on maturation. Cystine bridges form between cysteine 75/cysteine 90, cysteine 82/cysteine 95, and cysteine 89/cysteine 110. Asparagine 85 carries N-linked (GlcNAc...) asparagine glycosylation.

Belongs to the neurotoxin 14 (magi-1) family. 06 (ICK-Trit) subfamily. In terms of tissue distribution, expressed by the venom gland.

Its subcellular location is the secreted. Its function is as follows. Ion channel inhibitor. The polypeptide is U16-barytoxin-Tl1f (Trittame loki (Brush-footed trapdoor spider)).